The following is a 743-amino-acid chain: Phosphoribosylformylglycinamidine synthase subunit PurL (743 aa).

His50 is an active-site residue. ATP contacts are provided by Tyr53 and Lys92. Glu94 serves as a coordination point for Mg(2+). Residues 95-98 (SHNH) and Arg117 each bind substrate. His96 functions as the Proton acceptor in the catalytic mechanism. Asp118 contacts Mg(2+). Gln241 provides a ligand contact to substrate. Asp269 is a binding site for Mg(2+). Position 313-315 (313-315 (ESQ)) interacts with substrate. Residues Asp494 and Gly531 each contribute to the ATP site. Asn532 is a Mg(2+) binding site. Substrate is bound at residue Ser534.

The protein belongs to the FGAMS family. Monomer. Part of the FGAM synthase complex composed of 1 PurL, 1 PurQ and 2 PurS subunits.

It is found in the cytoplasm. The enzyme catalyses N(2)-formyl-N(1)-(5-phospho-beta-D-ribosyl)glycinamide + L-glutamine + ATP + H2O = 2-formamido-N(1)-(5-O-phospho-beta-D-ribosyl)acetamidine + L-glutamate + ADP + phosphate + H(+). It participates in purine metabolism; IMP biosynthesis via de novo pathway; 5-amino-1-(5-phospho-D-ribosyl)imidazole from N(2)-formyl-N(1)-(5-phospho-D-ribosyl)glycinamide: step 1/2. Part of the phosphoribosylformylglycinamidine synthase complex involved in the purines biosynthetic pathway. Catalyzes the ATP-dependent conversion of formylglycinamide ribonucleotide (FGAR) and glutamine to yield formylglycinamidine ribonucleotide (FGAM) and glutamate. The FGAM synthase complex is composed of three subunits. PurQ produces an ammonia molecule by converting glutamine to glutamate. PurL transfers the ammonia molecule to FGAR to form FGAM in an ATP-dependent manner. PurS interacts with PurQ and PurL and is thought to assist in the transfer of the ammonia molecule from PurQ to PurL. The polypeptide is Phosphoribosylformylglycinamidine synthase subunit PurL (Sinorhizobium fredii (strain HH103)).